The primary structure comprises 213 residues: Orotate phosphoribosyltransferase (213 aa).

Lysine 26 lines the 5-phospho-alpha-D-ribose 1-diphosphate pocket. 34 to 35 (FF) lines the orotate pocket. 5-phospho-alpha-D-ribose 1-diphosphate-binding positions include 72–73 (YK), arginine 99, lysine 100, lysine 103, histidine 105, and 124–132 (DDVITAGTA). Threonine 128 and arginine 156 together coordinate orotate.

Belongs to the purine/pyrimidine phosphoribosyltransferase family. PyrE subfamily. Homodimer. Mg(2+) serves as cofactor.

It carries out the reaction orotidine 5'-phosphate + diphosphate = orotate + 5-phospho-alpha-D-ribose 1-diphosphate. The protein operates within pyrimidine metabolism; UMP biosynthesis via de novo pathway; UMP from orotate: step 1/2. In terms of biological role, catalyzes the transfer of a ribosyl phosphate group from 5-phosphoribose 1-diphosphate to orotate, leading to the formation of orotidine monophosphate (OMP). This Pseudomonas syringae pv. syringae (strain B728a) protein is Orotate phosphoribosyltransferase.